A 495-amino-acid polypeptide reads, in one-letter code: MVAFATEKKQDLNLLSKIASGDGHGENSSYFDGWKAYEENPFHPIDRPDGVIQMGLAENQLCGDLMRKWVLKHPEASICTSEGVNQFSDIAIFQDYHGLPEFRQAVAKFMEKTRNNKVKFDPDRIVMSGGATGAHETVAFCLANPGDGFLVPTPYYPGFDRDLRWRTGVNLVPVTCHSSNGFKITVEALEAAYENARKSNIPVKGLLVTNPSNPLGTTLDRECLKSLVNFTNDKGIHLIADEIYAATTFGQSEFISVAEVIEEIEDCNRDLIHIVYSLSKDMGLPGLRVGIVYSYNDRVVQIARKMSSFGLVSSQTQHLIAKMLSDEEFVDEFIRESKLRLAARHAEITTGLDGLGIGWLKAKAGLFLWMDLRNLLKTATFDSETELWRVIVHQVKLNVSPGGSFHCHEPGWFRVCFANMDHKTMETALERIRVFTSQLEEETKPMAATTMMAKKKKKCWQSNLRLSFSDTRRFDDGFFSPHSPVPPSPLVRAQT.

Substrate-binding residues include E58 and Y96. Position 280 is an N6-(pyridoxal phosphate)lysine (K280). 3 positions are modified to phosphoserine: S480, S483, and S488.

The protein belongs to the class-I pyridoxal-phosphate-dependent aminotransferase family. In terms of assembly, homodimer and heterodimer. In vivo, the relevance of heterodimerization with other ACS enzymes is however unsure. Interacts with GRF3. It depends on pyridoxal 5'-phosphate as a cofactor. Post-translationally, phosphorylated on serine residue by MAP kinase (MPK6). May be processed at its C-terminus. As to expression, expressed in roots and flowers.

It catalyses the reaction S-adenosyl-L-methionine = 1-aminocyclopropane-1-carboxylate + S-methyl-5'-thioadenosine + H(+). It participates in alkene biosynthesis; ethylene biosynthesis via S-adenosyl-L-methionine; ethylene from S-adenosyl-L-methionine: step 1/2. Its function is as follows. 1-aminocyclopropane-1-carboxylate synthase (ACS) enzymes catalyze the conversion of S-adenosyl-L-methionine (SAM) into 1-aminocyclopropane-1-carboxylate (ACC), a direct precursor of ethylene. Involved in bacterial flagellin-induced ethylene production. This is 1-aminocyclopropane-1-carboxylate synthase 6 (ACS6) from Arabidopsis thaliana (Mouse-ear cress).